The sequence spans 148 residues: Deoxyuridine 5'-triphosphate nucleotidohydrolase (148 aa).

Residues 67 to 69 (RSG), Asn80, 84 to 86 (LID), and Met94 each bind substrate.

Belongs to the dUTPase family. Mg(2+) serves as cofactor.

It carries out the reaction dUTP + H2O = dUMP + diphosphate + H(+). The protein operates within pyrimidine metabolism; dUMP biosynthesis; dUMP from dCTP (dUTP route): step 2/2. Its function is as follows. This enzyme is involved in nucleotide metabolism: it produces dUMP, the immediate precursor of thymidine nucleotides and it decreases the intracellular concentration of dUTP so that uracil cannot be incorporated into DNA. The protein is Deoxyuridine 5'-triphosphate nucleotidohydrolase of Ralstonia pickettii (strain 12J).